A 500-amino-acid polypeptide reads, in one-letter code: Tektin-like protein 1 (500 aa).

Residues 198–229 (MLTWEKEELKSMKRKMEADMEKSEALLKTLAS) adopt a coiled-coil conformation. A Phosphotyrosine modification is found at Tyr372. Positions 420–444 (DKLQRHISHVEKNLDELLSMRKKLT) form a coiled coil.

As to quaternary structure, microtubule inner protein component of sperm flagellar doublet microtubules.

It is found in the cytoplasm. It localises to the cytoskeleton. The protein localises to the flagellum axoneme. Microtubule inner protein (MIP) part of the dynein-decorated doublet microtubules (DMTs) in sperm flagellar axoneme, which is required for motile flagellum beating. Forms an extensive interaction network cross-linking the lumen of axonemal doublet microtubules. The sequence is that of Tektin-like protein 1 from Bos taurus (Bovine).